The primary structure comprises 324 residues: MKPLKILFAGTPDFAARHLQALIDSEHQVIGVYSQPDRPAGRGKKLQASPVKALALEHDIPVYQPVSLRNEDAQAELAALGADIMVVVAYGLILPQVVLDTPRLGCINVHGSILPRWRGAAPIQRALWAGDAATGVTIMQMDIGLDTGDMLLKTHLPIEDRDTSASLYEKLAEQGPSALIQALKGLAEGSLTPEPQDEALANYAEKLSKEEAQLDWRKPAEQLWREVRAFNPWPASHFPHQDAAIKVWQASVSIEAAKQAPGTIIRADKQGIAVATGEGALVLETIQLPGKKAMAVADVLNARGDWFTPGTQLQGVTPADEAQA.

Residue 112-115 (SILP) participates in (6S)-5,6,7,8-tetrahydrofolate binding.

It belongs to the Fmt family.

It carries out the reaction L-methionyl-tRNA(fMet) + (6R)-10-formyltetrahydrofolate = N-formyl-L-methionyl-tRNA(fMet) + (6S)-5,6,7,8-tetrahydrofolate + H(+). In terms of biological role, attaches a formyl group to the free amino group of methionyl-tRNA(fMet). The formyl group appears to play a dual role in the initiator identity of N-formylmethionyl-tRNA by promoting its recognition by IF2 and preventing the misappropriation of this tRNA by the elongation apparatus. This is Methionyl-tRNA formyltransferase from Shewanella loihica (strain ATCC BAA-1088 / PV-4).